Consider the following 144-residue polypeptide: Large-conductance mechanosensitive channel (144 aa).

2 consecutive transmembrane segments (helical) span residues 16 to 36 (VIDL…VDSV) and 86 to 106 (GNFL…FMMV).

This sequence belongs to the MscL family. In terms of assembly, homopentamer.

It localises to the cell inner membrane. Channel that opens in response to stretch forces in the membrane lipid bilayer. May participate in the regulation of osmotic pressure changes within the cell. This Cupriavidus metallidurans (strain ATCC 43123 / DSM 2839 / NBRC 102507 / CH34) (Ralstonia metallidurans) protein is Large-conductance mechanosensitive channel.